The primary structure comprises 139 residues: Class I hydrophobin A (139 aa).

The first 18 residues, 1 to 18 (MKFSIAAAVLALASAVVA), serve as a signal peptide directing secretion. 4 cysteine pairs are disulfide-bonded: Cys-45–Cys-113, Cys-53–Cys-107, Cys-54–Cys-88, and Cys-114–Cys-133.

The protein belongs to the fungal hydrophobin family. In terms of assembly, self-assembles to form functional amyloid fibrils called rodlets. Self-assembly into fibrillar rodlets occurs spontaneously at hydrophobic:hydrophilic interfaces and the rodlets further associate laterally to form amphipathic monolayers.

It localises to the secreted. The protein localises to the cell wall. Functionally, aerial growth, conidiation, and dispersal of filamentous fungi in the environment rely upon a capability of their secreting small amphipathic proteins called hydrophobins (HPBs) with low sequence identity. Class I can self-assemble into an outermost layer of rodlet bundles on aerial cell surfaces, conferring cellular hydrophobicity that supports fungal growth, development and dispersal; whereas Class II form highly ordered films at water-air interfaces through intermolecular interactions but contribute nothing to the rodlet structure. HYPA is a class I hydrophobin that contributes to surface hydrophobicity, and prevents recognition by the cellular immune defense system. This Arthroderma benhamiae (strain ATCC MYA-4681 / CBS 112371) (Trichophyton mentagrophytes) protein is Class I hydrophobin A.